Here is a 224-residue protein sequence, read N- to C-terminus: Redox-sensing transcriptional repressor Rex (224 aa).

The H-T-H motif DNA-binding region spans 17 to 56; it reads RYHRCLEELLKNDIKRISSKELSERMGVTASQIRQDLNNF. NAD(+) is bound at residue 91–96; it reads GAGNLG.

The protein belongs to the transcriptional regulatory Rex family. In terms of assembly, homodimer.

It localises to the cytoplasm. In terms of biological role, modulates transcription in response to changes in cellular NADH/NAD(+) redox state. The polypeptide is Redox-sensing transcriptional repressor Rex (Caldanaerobacter subterraneus subsp. tengcongensis (strain DSM 15242 / JCM 11007 / NBRC 100824 / MB4) (Thermoanaerobacter tengcongensis)).